The chain runs to 478 residues: Adenylosuccinate lyase (478 aa).

Residues 14–15 (RY), 81–83 (KHD), and 107–108 (TS) contribute to the substrate site. H155 serves as the catalytic Proton donor/acceptor. Q237 lines the substrate pocket. S285 acts as the Proton donor/acceptor in catalysis. Substrate-binding residues include R299, R325, S330, and R334.

It belongs to the lyase 1 family. Adenylosuccinate lyase subfamily. As to quaternary structure, homotetramer. Residues from neighboring subunits contribute catalytic and substrate-binding residues to each active site.

It carries out the reaction N(6)-(1,2-dicarboxyethyl)-AMP = fumarate + AMP. It catalyses the reaction (2S)-2-[5-amino-1-(5-phospho-beta-D-ribosyl)imidazole-4-carboxamido]succinate = 5-amino-1-(5-phospho-beta-D-ribosyl)imidazole-4-carboxamide + fumarate. It functions in the pathway purine metabolism; AMP biosynthesis via de novo pathway; AMP from IMP: step 2/2. It participates in purine metabolism; IMP biosynthesis via de novo pathway; 5-amino-1-(5-phospho-D-ribosyl)imidazole-4-carboxamide from 5-amino-1-(5-phospho-D-ribosyl)imidazole-4-carboxylate: step 2/2. Functionally, catalyzes two non-sequential steps in de novo AMP synthesis: converts (S)-2-(5-amino-1-(5-phospho-D-ribosyl)imidazole-4-carboxamido)succinate (SAICAR) to fumarate plus 5-amino-1-(5-phospho-D-ribosyl)imidazole-4-carboxamide, and thereby also contributes to de novo IMP synthesis, and converts succinyladenosine monophosphate (SAMP) to AMP and fumarate. The protein is Adenylosuccinate lyase of Caenorhabditis briggsae.